Reading from the N-terminus, the 189-residue chain is Isopentenyl-diphosphate Delta-isomerase 2 (189 aa).

Residues His24 and His30 each coordinate Mn(2+). The region spanning 28 to 160 (ALHRAISIFV…PETYSFWLAA (133 aa)) is the Nudix hydrolase domain. The active site involves Cys65. Cys65 contacts Mg(2+). Residue His67 participates in Mn(2+) binding. Glu85 lines the Mg(2+) pocket. Glu110 and Glu112 together coordinate Mn(2+). Glu112 is an active-site residue.

It belongs to the IPP isomerase type 1 family. Mg(2+) serves as cofactor. It depends on Mn(2+) as a cofactor.

It localises to the cytoplasm. The enzyme catalyses isopentenyl diphosphate = dimethylallyl diphosphate. It functions in the pathway isoprenoid biosynthesis; dimethylallyl diphosphate biosynthesis; dimethylallyl diphosphate from isopentenyl diphosphate: step 1/1. Its function is as follows. Catalyzes the 1,3-allylic rearrangement of the homoallylic substrate isopentenyl (IPP) to its highly electrophilic allylic isomer, dimethylallyl diphosphate (DMAPP). The protein is Isopentenyl-diphosphate Delta-isomerase 2 of Aromatoleum aromaticum (strain DSM 19018 / LMG 30748 / EbN1) (Azoarcus sp. (strain EbN1)).